The chain runs to 177 residues: MAEYLATCSFHSSFVKHFFPYVKSFPPFLPWPLQDPLFVVSLLRVDIVISICYHTQIYLHPADICLYCPFACNLMTKLHMLASRKMMYHQNVSCNEPGHRAGRVRKARSTLIVINSNTMERLPFTRNGSGQQSNKLRDPKKGRTHKPKPSEKHKKNKTGKKGAQEKTHRSRSSRKGN.

Residues 122 to 177 (LPFTRNGSGQQSNKLRDPKKGRTHKPKPSEKHKKNKTGKKGAQEKTHRSRSSRKGN) are disordered. Composition is skewed to basic residues over residues 142–160 (GRTHKPKPSEKHKKNKTGK) and 168–177 (HRSRSSRKGN).

This is an uncharacterized protein from Saccharomyces cerevisiae (strain ATCC 204508 / S288c) (Baker's yeast).